We begin with the raw amino-acid sequence, 288 residues long: Probable anion import ATP-binding protein HVO_1886 (288 aa).

Residues 1–18 (MTTERPDAGDSGSEKPDE) show a composition bias toward basic and acidic residues. The disordered stretch occupies residues 1 to 33 (MTTERPDAGDSGSEKPDETAAPDPAANGARRSK). Residues 36-282 (LAARSLGHGF…PDDDRVRQFV (247 aa)) enclose the ABC transporter domain. ATP is bound at residue 68-75 (GPSGTGKT).

Belongs to the ABC transporter superfamily. In terms of assembly, the complex is composed of two ATP-binding proteins (HVO_1886), two transmembrane proteins (HVO_1887) and a solute-binding protein (HVO_1888).

Its subcellular location is the cell membrane. In terms of biological role, part of an ABC transporter complex involved in anions import. Responsible for energy coupling to the transport system. This is Probable anion import ATP-binding protein HVO_1886 from Haloferax volcanii (strain ATCC 29605 / DSM 3757 / JCM 8879 / NBRC 14742 / NCIMB 2012 / VKM B-1768 / DS2) (Halobacterium volcanii).